A 676-amino-acid polypeptide reads, in one-letter code: DNA ligase (676 aa).

Residues 1–10 (MTQAHHDDAG) show a composition bias toward basic and acidic residues. A disordered region spans residues 1-23 (MTQAHHDDAGARNALQGGLATDP). Residues 52–56 (DAAFD) and 95–96 (SL) contribute to the NAD(+) site. Lys148 acts as the N6-AMP-lysine intermediate in catalysis. NAD(+) is bound by residues Arg169, Glu203, and Lys330. Zn(2+)-binding residues include Cys420, Cys423, Cys436, and Cys441. The 84-residue stretch at 593–676 (EAEGPLAGLT…DKLIAERRGG (84 aa)) folds into the BRCT domain.

The protein belongs to the NAD-dependent DNA ligase family. LigA subfamily. The cofactor is Mg(2+). Requires Mn(2+) as cofactor.

It catalyses the reaction NAD(+) + (deoxyribonucleotide)n-3'-hydroxyl + 5'-phospho-(deoxyribonucleotide)m = (deoxyribonucleotide)n+m + AMP + beta-nicotinamide D-nucleotide.. Its function is as follows. DNA ligase that catalyzes the formation of phosphodiester linkages between 5'-phosphoryl and 3'-hydroxyl groups in double-stranded DNA using NAD as a coenzyme and as the energy source for the reaction. It is essential for DNA replication and repair of damaged DNA. The protein is DNA ligase of Sorangium cellulosum (strain So ce56) (Polyangium cellulosum (strain So ce56)).